The primary structure comprises 386 residues: Histidinol-phosphate aminotransferase (386 aa).

N6-(pyridoxal phosphate)lysine is present on K240.

It belongs to the class-II pyridoxal-phosphate-dependent aminotransferase family. Histidinol-phosphate aminotransferase subfamily. As to quaternary structure, homodimer. Pyridoxal 5'-phosphate is required as a cofactor.

It catalyses the reaction L-histidinol phosphate + 2-oxoglutarate = 3-(imidazol-4-yl)-2-oxopropyl phosphate + L-glutamate. Its pathway is amino-acid biosynthesis; L-histidine biosynthesis; L-histidine from 5-phospho-alpha-D-ribose 1-diphosphate: step 7/9. The polypeptide is Histidinol-phosphate aminotransferase (Bifidobacterium longum (strain NCC 2705)).